The chain runs to 390 residues: Probable splicing factor YJU2B (390 aa).

Positions 354-390 (DACKASSSSEEENSIDSCATGKSLVADYSDSDSGSEV) are disordered.

The protein belongs to the CWC16 family.

It is found in the nucleus. Its function is as follows. May be involved in mRNA splicing. The protein is Probable splicing factor YJU2B (yju2b) of Danio rerio (Zebrafish).